Consider the following 528-residue polypeptide: Glucose-6-phosphate isomerase (528 aa).

E322 acts as the Proton donor in catalysis. Residues H351 and K455 contribute to the active site.

It belongs to the GPI family.

The protein localises to the cytoplasm. The catalysed reaction is alpha-D-glucose 6-phosphate = beta-D-fructose 6-phosphate. It participates in carbohydrate biosynthesis; gluconeogenesis. Its pathway is carbohydrate degradation; glycolysis; D-glyceraldehyde 3-phosphate and glycerone phosphate from D-glucose: step 2/4. In terms of biological role, catalyzes the reversible isomerization of glucose-6-phosphate to fructose-6-phosphate. In Trichormus variabilis (strain ATCC 29413 / PCC 7937) (Anabaena variabilis), this protein is Glucose-6-phosphate isomerase.